Here is a 210-residue protein sequence, read N- to C-terminus: Large ribosomal subunit protein uL4 (210 aa).

A compositionally biased stretch (polar residues) spans 41–52; it reads QTNARQGTASTK. The disordered stretch occupies residues 41-71; the sequence is QTNARQGTASTKTRAEVRGGGRKPWRQKGTG. Over residues 60–71 the composition is skewed to basic residues; the sequence is GGRKPWRQKGTG.

The protein belongs to the universal ribosomal protein uL4 family. In terms of assembly, part of the 50S ribosomal subunit.

In terms of biological role, one of the primary rRNA binding proteins, this protein initially binds near the 5'-end of the 23S rRNA. It is important during the early stages of 50S assembly. It makes multiple contacts with different domains of the 23S rRNA in the assembled 50S subunit and ribosome. Functionally, forms part of the polypeptide exit tunnel. This chain is Large ribosomal subunit protein uL4, found in Nostoc sp. (strain PCC 7120 / SAG 25.82 / UTEX 2576).